The primary structure comprises 404 residues: CCA-adding enzyme (404 aa).

Positions 27 and 30 each coordinate ATP. Positions 27 and 30 each coordinate CTP. The Mg(2+) site is built by Asp-40 and Asp-42. ATP is bound by residues Arg-111, Asp-154, Arg-157, Arg-160, and Arg-163. CTP contacts are provided by Arg-111, Asp-154, Arg-157, Arg-160, and Arg-163.

It belongs to the tRNA nucleotidyltransferase/poly(A) polymerase family. Bacterial CCA-adding enzyme type 3 subfamily. In terms of assembly, homodimer. It depends on Mg(2+) as a cofactor.

The enzyme catalyses a tRNA precursor + 2 CTP + ATP = a tRNA with a 3' CCA end + 3 diphosphate. The catalysed reaction is a tRNA with a 3' CCA end + 2 CTP + ATP = a tRNA with a 3' CCACCA end + 3 diphosphate. Functionally, catalyzes the addition and repair of the essential 3'-terminal CCA sequence in tRNAs without using a nucleic acid template. Adds these three nucleotides in the order of C, C, and A to the tRNA nucleotide-73, using CTP and ATP as substrates and producing inorganic pyrophosphate. tRNA 3'-terminal CCA addition is required both for tRNA processing and repair. Also involved in tRNA surveillance by mediating tandem CCA addition to generate a CCACCA at the 3' terminus of unstable tRNAs. While stable tRNAs receive only 3'-terminal CCA, unstable tRNAs are marked with CCACCA and rapidly degraded. The polypeptide is CCA-adding enzyme (Geobacillus sp. (strain WCH70)).